The primary structure comprises 348 residues: 4-hydroxy-2-oxovalerate aldolase 1 (348 aa).

The 253-residue stretch at 8–260 (ITVHDMTLRD…QTGVDVWAIQ (253 aa)) folds into the Pyruvate carboxyltransferase domain. Residue 16 to 17 (RD) coordinates substrate. Asp-17 serves as a coordination point for Mn(2+). Catalysis depends on His-20, which acts as the Proton acceptor. The substrate site is built by Ser-170 and His-199. Mn(2+) is bound by residues His-199 and His-201. Residue Tyr-290 coordinates substrate.

This sequence belongs to the 4-hydroxy-2-oxovalerate aldolase family.

It carries out the reaction (S)-4-hydroxy-2-oxopentanoate = acetaldehyde + pyruvate. The protein is 4-hydroxy-2-oxovalerate aldolase 1 of Cupriavidus metallidurans (strain ATCC 43123 / DSM 2839 / NBRC 102507 / CH34) (Ralstonia metallidurans).